The chain runs to 435 residues: Tol-Pal system protein TolB (435 aa).

The N-terminal stretch at 1–24 (MIPMPKMIRSLLLLFCLLPLGAQA) is a signal peptide.

The protein belongs to the TolB family. The Tol-Pal system is composed of five core proteins: the inner membrane proteins TolA, TolQ and TolR, the periplasmic protein TolB and the outer membrane protein Pal. They form a network linking the inner and outer membranes and the peptidoglycan layer.

Its subcellular location is the periplasm. Functionally, part of the Tol-Pal system, which plays a role in outer membrane invagination during cell division and is important for maintaining outer membrane integrity. The sequence is that of Tol-Pal system protein TolB from Thioalkalivibrio sulfidiphilus (strain HL-EbGR7).